We begin with the raw amino-acid sequence, 350 residues long: LysM domain-containing GPI-anchored protein 2 (350 aa).

Residues 1 to 23 form the signal peptide; that stretch reads METSCFTLLGLLVSLSFFLTLSA. 4 N-linked (GlcNAc...) asparagine glycosylation sites follow: Asn30, Asn48, Asn76, and Asn99. 4 disulfides stabilise this stretch: Cys31–Cys97, Cys38–Cys161, Cys95–Cys159, and Cys97–Cys161. 2 LysM domains span residues 108 to 155 and 172 to 216; these read IEYT…KFWI and YAHV…PLDV. Chitin is bound by residues 114–120 and 142–149; these read KDDILSF and PDPNKIEI. Asn193, Asn238, Asn258, Asn289, and Asn305 each carry an N-linked (GlcNAc...) asparagine glycan. Disulfide bonds link Cys221–Cys253 and Cys248–Cys277. Asp318 is lipidated: GPI-anchor amidated aspartate. The propeptide at 319–350 is removed in mature form; the sequence is SAGPDNYASTLSSSFNFVIVLIQCALLCLCLL.

As to quaternary structure, forms homooligomers. Interacts with CERK1. Binds to chitin oligosaccharide elicitor.

It is found in the cell membrane. In terms of biological role, chitin elicitor-binding protein involved in the perception of chitin oligosaccharide elicitor. The sequence is that of LysM domain-containing GPI-anchored protein 2 (LYM2) from Arabidopsis thaliana (Mouse-ear cress).